The sequence spans 227 residues: MNVVYKGKTKDVFLLEDGNYLLKFKDDVTGENGVFDPGANSVGLTMEGAGRAALRLTKLFFERLKEEKIPTHYIDSNVEEGTMKVKPAKIFGNGLEVICRYRAVGSFMRRYGMYAKEGQVLDAFVEVTLKDDERQDPPITKDALDMLGILSLREYDILKDLTKKISGIVKDELSKKGIELYDIKLEFGRIDEDNHIALIDEISGGNMRAYKDGEYIEPLDLEKLIIE.

This sequence belongs to the SAICAR synthetase family.

It carries out the reaction 5-amino-1-(5-phospho-D-ribosyl)imidazole-4-carboxylate + L-aspartate + ATP = (2S)-2-[5-amino-1-(5-phospho-beta-D-ribosyl)imidazole-4-carboxamido]succinate + ADP + phosphate + 2 H(+). Its pathway is purine metabolism; IMP biosynthesis via de novo pathway; 5-amino-1-(5-phospho-D-ribosyl)imidazole-4-carboxamide from 5-amino-1-(5-phospho-D-ribosyl)imidazole-4-carboxylate: step 1/2. The protein is Phosphoribosylaminoimidazole-succinocarboxamide synthase of Clostridium tetani (strain Massachusetts / E88).